The sequence spans 105 residues: MHGKVPTLQEVILELAPQTEIDLQCNEQLDSSEDEDEDEIDHLLERPQQARQAEQHKCYLIHVPCCKCELVVQLDIQSTKEELRVVQQLLMGALTVTCPLCASSK.

The E7 terminal domain stretch occupies residues 1-45 (MHGKVPTLQEVILELAPQTEIDLQCNEQLDSSEDEDEDEIDHLLE). An LXCXE motif; interaction with host RB1 and TMEM173/STING motif is present at residues 23-27 (LQCNE). A zinc finger lies at 65 to 101 (CCKCELVVQLDIQSTKEELRVVQQLLMGALTVTCPLC). Residues 83–91 (LRVVQQLLM) carry the Nuclear export signal motif.

Belongs to the papillomaviridae E7 protein family. In terms of assembly, homodimer. Homooligomer. Interacts with host RB1; this interaction induces dissociation of RB1-E2F1 complex thereby disrupting RB1 activity. Interacts with host EP300; this interaction represses EP300 transcriptional activity. Interacts with protein E2; this interaction inhibits E7 oncogenic activity. Interacts with host TMEM173/STING; this interaction impairs the ability of TMEM173/STING to sense cytosolic DNA and promote the production of type I interferon (IFN-alpha and IFN-beta). Post-translationally, highly phosphorylated.

The protein localises to the host cytoplasm. It is found in the host nucleus. Plays a role in viral genome replication by driving entry of quiescent cells into the cell cycle. Stimulation of progression from G1 to S phase allows the virus to efficiently use the cellular DNA replicating machinery to achieve viral genome replication. E7 protein has both transforming and trans-activating activities. Induces the disassembly of the E2F1 transcription factor from RB1, with subsequent transcriptional activation of E2F1-regulated S-phase genes. Interferes with host histone deacetylation mediated by HDAC1 and HDAC2, leading to transcription activation. Also plays a role in the inhibition of both antiviral and antiproliferative functions of host interferon alpha. Interaction with host TMEM173/STING impairs the ability of TMEM173/STING to sense cytosolic DNA and promote the production of type I interferon (IFN-alpha and IFN-beta). This chain is Protein E7, found in Homo sapiens (Human).